The primary structure comprises 124 residues: Large ribosomal subunit protein uL22c (124 aa).

The protein belongs to the universal ribosomal protein uL22 family. As to quaternary structure, part of the 50S ribosomal subunit.

It is found in the plastid. It localises to the chloroplast. Its function is as follows. This protein binds specifically to 23S rRNA. Functionally, the globular domain of the protein is located near the polypeptide exit tunnel on the outside of the subunit, while an extended beta-hairpin is found that lines the wall of the exit tunnel in the center of the 70S ribosome. This is Large ribosomal subunit protein uL22c (rpl22) from Amborella trichopoda.